Reading from the N-terminus, the 412-residue chain is Serine hydroxymethyltransferase (412 aa).

(6S)-5,6,7,8-tetrahydrofolate is bound by residues Leu117 and 121 to 123 (GHL). N6-(pyridoxal phosphate)lysine is present on Lys226. 349–351 (SPF) provides a ligand contact to (6S)-5,6,7,8-tetrahydrofolate.

Belongs to the SHMT family. In terms of assembly, homodimer. It depends on pyridoxal 5'-phosphate as a cofactor.

Its subcellular location is the cytoplasm. It catalyses the reaction (6R)-5,10-methylene-5,6,7,8-tetrahydrofolate + glycine + H2O = (6S)-5,6,7,8-tetrahydrofolate + L-serine. The protein operates within one-carbon metabolism; tetrahydrofolate interconversion. It functions in the pathway amino-acid biosynthesis; glycine biosynthesis; glycine from L-serine: step 1/1. Its function is as follows. Catalyzes the reversible interconversion of serine and glycine with tetrahydrofolate (THF) serving as the one-carbon carrier. This reaction serves as the major source of one-carbon groups required for the biosynthesis of purines, thymidylate, methionine, and other important biomolecules. Also exhibits THF-independent aldolase activity toward beta-hydroxyamino acids, producing glycine and aldehydes, via a retro-aldol mechanism. This Lawsonia intracellularis (strain PHE/MN1-00) protein is Serine hydroxymethyltransferase.